The primary structure comprises 104 residues: V-type ATP synthase subunit F (104 aa).

The protein belongs to the V-ATPase F subunit family.

Produces ATP from ADP in the presence of a proton gradient across the membrane. The protein is V-type ATP synthase subunit F of Thermus thermophilus (strain ATCC BAA-163 / DSM 7039 / HB27).